The primary structure comprises 339 residues: Ornithine carbamoyltransferase, catabolic (339 aa).

Residues 57–60 (STRT), Gln84, Arg108, and 135–138 (HPTQ) contribute to the carbamoyl phosphate site. Residues Asn167, Asp231, and 235–236 (SM) each bind L-ornithine. Carbamoyl phosphate contacts are provided by residues 274 to 275 (CL) and Arg319.

The protein belongs to the aspartate/ornithine carbamoyltransferase superfamily. OTCase family.

It is found in the cytoplasm. It catalyses the reaction carbamoyl phosphate + L-ornithine = L-citrulline + phosphate + H(+). It functions in the pathway amino-acid degradation; L-arginine degradation via ADI pathway; carbamoyl phosphate from L-arginine: step 2/2. Its function is as follows. Reversibly catalyzes the transfer of the carbamoyl group from carbamoyl phosphate (CP) to the N(epsilon) atom of ornithine (ORN) to produce L-citrulline. This Enterococcus faecalis (strain ATCC 700802 / V583) protein is Ornithine carbamoyltransferase, catabolic (arcB).